The chain runs to 807 residues: Putative transmembrane protein ORF807 (807 aa).

5 helical membrane-spanning segments follow: residues 210–230, 234–254, 270–290, 459–479, and 657–677; these read VLML…SDIL, GLST…IVYF, VTIQ…FVIL, ILIG…LVLT, and VALL…MPLV.

The protein localises to the host membrane. The polypeptide is Putative transmembrane protein ORF807 (Acidianus filamentous virus 1 (isolate United States/Yellowstone) (AFV-1)).